The primary structure comprises 147 residues: Large ribosomal subunit protein uL23A (147 aa).

Positions M1–A10 are enriched in low complexity. The disordered stretch occupies residues M1 to R29. Over residues K18 to R29 the composition is skewed to basic residues.

Belongs to the universal ribosomal protein uL23 family.

This protein binds to a specific region on the 26S rRNA. In Caenorhabditis elegans, this protein is Large ribosomal subunit protein uL23A.